The following is a 435-amino-acid chain: Endoglucanase EG-1 (435 aa).

An N-terminal signal peptide occupies residues 1 to 20 (MARGTALLGLTSLLLGLVNG). The residue at position 21 (Gln21) is a Pyrrolidone carboxylic acid. Disulfide bonds link Cys38-Cys44, Cys71-Cys93, and Cys83-Cys89. The N-linked (GlcNAc...) asparagine glycan is linked to Asn109. 6 cysteine pairs are disulfide-bonded: Cys160–Cys385, Cys192–Cys215, Cys196–Cys214, Cys235–Cys254, Cys243–Cys248, and Cys259–Cys335. Glu217 (nucleophile) is an active-site residue. Residue Glu222 is the Proton donor of the active site. A glycan (N-linked (GlcNAc...) asparagine) is linked at Asn267.

Belongs to the glycosyl hydrolase 7 (cellulase C) family.

The protein resides in the secreted. The enzyme catalyses Endohydrolysis of (1-&gt;4)-beta-D-glucosidic linkages in cellulose, lichenin and cereal beta-D-glucans.. Its function is as follows. The biological conversion of cellulose to glucose generally requires three types of hydrolytic enzymes: (1) Endoglucanases which cut internal beta-1,4-glucosidic bonds; (2) Exocellobiohydrolases that cut the disaccharide cellobiose from the non-reducing end of the cellulose polymer chain; (3) Beta-1,4-glucosidases which hydrolyze the cellobiose and other short cello-oligosaccharides to glucose. This is Endoglucanase EG-1 (EG-1) from Humicola insolens (Soft-rot fungus).